Reading from the N-terminus, the 589-residue chain is F-box only protein 24 (589 aa).

One can recognise an F-box domain in the interval 23 to 69; sequence PISVQLFPPELVEHIVSFLPVKDLVALGQTCHYFHEVCDAEGVWRRI. The stretch at 386–435 is one RCC1 repeat; sequence GRIFMQGNNRYGQLGTGDKMDRGEPTQVHYLQRPIALWCGLNHSLVLSQT. Residues 506-526 form a disordered region; sequence VGGSPEPSQGAGAPQDPGGTA.

Directly interacts with SKP1 and CUL1.

Functionally, substrate-recognition component of the SCF (SKP1-CUL1-F-box protein)-type E3 ubiquitin ligase complex. The chain is F-box only protein 24 (Fbxo24) from Mus musculus (Mouse).